Reading from the N-terminus, the 750-residue chain is Photosystem I P700 chlorophyll a apoprotein A1 (750 aa).

8 helical membrane passes run 70–93 (IFSA…FHGA), 156–179 (LYCT…FHYH), 195–219 (LNHH…HVSL), 291–309 (TAHH…GHMY), 346–369 (WHAQ…HHMY), 385–411 (LSLF…IFMV), 433–455 (AIIS…LYIH), and 531–549 (FLVH…LILL). 2 residues coordinate [4Fe-4S] cluster: cysteine 573 and cysteine 582. 2 helical membrane-spanning segments follow: residues 589–610 (HVFL…HFSW) and 664–686 (LSAY…MFLF). Histidine 675 lines the chlorophyll a' pocket. Chlorophyll a contacts are provided by methionine 683 and tyrosine 691. Tryptophan 692 is a binding site for phylloquinone. The chain crosses the membrane as a helical span at residues 724-744 (AVGVTHYLLGGIATTWAFFLA).

Belongs to the PsaA/PsaB family. The PsaA/B heterodimer binds the P700 chlorophyll special pair and subsequent electron acceptors. PSI consists of a core antenna complex that captures photons, and an electron transfer chain that converts photonic excitation into a charge separation. The eukaryotic PSI reaction center is composed of at least 11 subunits. P700 is a chlorophyll a/chlorophyll a' dimer, A0 is one or more chlorophyll a, A1 is one or both phylloquinones and FX is a shared 4Fe-4S iron-sulfur center. is required as a cofactor.

It localises to the plastid. Its subcellular location is the chloroplast thylakoid membrane. It carries out the reaction reduced [plastocyanin] + hnu + oxidized [2Fe-2S]-[ferredoxin] = oxidized [plastocyanin] + reduced [2Fe-2S]-[ferredoxin]. In terms of biological role, psaA and PsaB bind P700, the primary electron donor of photosystem I (PSI), as well as the electron acceptors A0, A1 and FX. PSI is a plastocyanin-ferredoxin oxidoreductase, converting photonic excitation into a charge separation, which transfers an electron from the donor P700 chlorophyll pair to the spectroscopically characterized acceptors A0, A1, FX, FA and FB in turn. Oxidized P700 is reduced on the lumenal side of the thylakoid membrane by plastocyanin. This Spinacia oleracea (Spinach) protein is Photosystem I P700 chlorophyll a apoprotein A1.